The following is a 294-amino-acid chain: RAB7A-interacting MON1-CCZ1 complex subunit 1 (294 aa).

Ala2 carries the post-translational modification N-acetylalanine.

The protein belongs to the RIMOC1 family. In terms of assembly, interacts with the MON1A-CCZ1B complex. Interacts with GDP-bound RAB7A and promotes its interaction with the MON1A-CCZ1B complex.

It is found in the cytoplasm. The protein localises to the cytosol. Plays an important role in the removal of damaged mitochondria via mitophagy by controlling the stability and localization of RAB7A. Required for the recruitment of RAB7A and ATG9A vesicles to damaged mitochondria and promotes the stability of RAB7A by inhibiting its proteasomal degradation during mitophagy. This is RAB7A-interacting MON1-CCZ1 complex subunit 1 from Mus musculus (Mouse).